Reading from the N-terminus, the 196-residue chain is V-type proton ATPase proteolipid subunit (196 aa).

Topologically, residues 1–25 are lumenal; it reads MFQLLSFLLSGEATAVERIITDACP. Residues 26–46 form a helical membrane-spanning segment; sequence VYAPFFGAMGVTAALVFTVMG. The Cytoplasmic portion of the chain corresponds to 47–72; that stretch reads AAYGTAKASVGISNMGVMKPDLVIKA. The helical transmembrane segment at 73–93 threads the bilayer; it reads FIPVIFAGVIAIYGLIICVIL. The Lumenal segment spans residues 94–111; the sequence is VGGIKPNANYTLMKSFTD. The chain crosses the membrane as a helical span at residues 112 to 132; the sequence is LGAGLTVGLCGLAAGMAIGIV. At 133–150 the chain is on the cytoplasmic side; that stretch reads GDSGVRAFGQQPKLYVIM. A helical transmembrane segment spans residues 151–171; sequence MLILIFSEALGLYGLIIGILL. Over 172 to 196 the chain is Lumenal; sequence SSVSDTYCPGQALVPLNSGNVIGKN.

Belongs to the V-ATPase proteolipid subunit family. In terms of assembly, V-ATPase is a heteromultimeric enzyme composed of a peripheral catalytic V1 complex (main components: subunits A, B, C, D, E, and F) attached to an integral membrane V0 proton pore complex (main component: the proteolipid protein; which is present as a hexamer that forms the proton-conducting pore).

The protein resides in the vacuole membrane. In terms of biological role, proton-conducting pore forming subunit of the membrane integral V0 complex of vacuolar ATPase. V-ATPase is responsible for acidifying a variety of intracellular compartments in eukaryotic cells. The sequence is that of V-type proton ATPase proteolipid subunit (vatP) from Dictyostelium discoideum (Social amoeba).